Here is a 93-residue protein sequence, read N- to C-terminus: Small ribosomal subunit protein bS18 (93 aa).

It belongs to the bacterial ribosomal protein bS18 family. In terms of assembly, part of the 30S ribosomal subunit. Forms a tight heterodimer with protein bS6.

Functionally, binds as a heterodimer with protein bS6 to the central domain of the 16S rRNA, where it helps stabilize the platform of the 30S subunit. The protein is Small ribosomal subunit protein bS18 of Acidovorax ebreus (strain TPSY) (Diaphorobacter sp. (strain TPSY)).